The chain runs to 604 residues: NADPH oxidase activator (604 aa).

2 TPR repeats span residues serine 36–leucine 69 and serine 71–histidine 103. Disordered stretches follow at residues phenylalanine 180–serine 298 and aspartate 383–valine 581. 2 stretches are compositionally biased toward low complexity: residues serine 194–serine 215 and proline 225–proline 243. A compositionally biased stretch (pro residues) spans lysine 244–serine 260. The span at serine 261–leucine 284 shows a compositional bias: low complexity. Residues lysine 309–isoleucine 384 enclose the PB1 domain. Low complexity-rich tracts occupy residues proline 396 to serine 424, proline 435 to threonine 453, and phenylalanine 467 to serine 483. Over residues leucine 502–glutamine 528 the composition is skewed to polar residues. The segment covering serine 529–serine 570 has biased composition (low complexity). Positions proline 573 to proline 604 constitute a WW domain.

May function as an activator of NOX1, a superoxide-producing NADPH oxidase. The sequence is that of NADPH oxidase activator (ncfA) from Dictyostelium discoideum (Social amoeba).